Consider the following 292-residue polypeptide: Ribosomal protein L11 methyltransferase (292 aa).

S-adenosyl-L-methionine is bound by residues T144, G165, D187, and N229.

This sequence belongs to the methyltransferase superfamily. PrmA family.

It is found in the cytoplasm. It carries out the reaction L-lysyl-[protein] + 3 S-adenosyl-L-methionine = N(6),N(6),N(6)-trimethyl-L-lysyl-[protein] + 3 S-adenosyl-L-homocysteine + 3 H(+). In terms of biological role, methylates ribosomal protein L11. The protein is Ribosomal protein L11 methyltransferase of Azotobacter vinelandii (strain DJ / ATCC BAA-1303).